The chain runs to 495 residues: Phosphomethylpyrimidine synthase (495 aa).

Residues N125, M154, Y183, H219, 239 to 241, 280 to 283, and E319 contribute to the substrate site; these read SRG and DGLR. Residue H323 coordinates Zn(2+). A substrate-binding site is contributed by Y346. Residue H387 participates in Zn(2+) binding. [4Fe-4S] cluster is bound by residues C467, C470, and C475.

Belongs to the ThiC family. [4Fe-4S] cluster is required as a cofactor.

It carries out the reaction 5-amino-1-(5-phospho-beta-D-ribosyl)imidazole + S-adenosyl-L-methionine = 4-amino-2-methyl-5-(phosphooxymethyl)pyrimidine + CO + 5'-deoxyadenosine + formate + L-methionine + 3 H(+). It functions in the pathway cofactor biosynthesis; thiamine diphosphate biosynthesis. Catalyzes the synthesis of the hydroxymethylpyrimidine phosphate (HMP-P) moiety of thiamine from aminoimidazole ribotide (AIR) in a radical S-adenosyl-L-methionine (SAM)-dependent reaction. This is Phosphomethylpyrimidine synthase from Leptospira interrogans serogroup Icterohaemorrhagiae serovar Lai (strain 56601).